We begin with the raw amino-acid sequence, 483 residues long: S-adenosylhomocysteine hydrolase-like protein 1 (483 aa).

Residues 1–56 are disordered; the sequence is MQEFTKFPTKTGRRSLSRSISQSSTDSYSSAASYTDSSDDEVSPREKQQTNSKGSS. A compositionally biased stretch (low complexity) spans 17 to 36; sequence SRSISQSSTDSYSSAASYTD. A PEST region spans residues 18–45; sequence RSISQSSTDSYSSAASYTDSSDDEVSPR. A Phosphoserine; by PKD modification is found at serine 21. 4 positions are modified to phosphoserine: serine 24, serine 27, serine 30, and serine 37. The interval 91 to 154 is interaction with BCL2L10; it reads QGEKPLAGAK…EAGVAVFAWK (64 aa). Positions 108, 182, 207, 237, and 241 each coordinate substrate. The segment at 234–401 is NAD binding; that stretch reads SVTKQKFDNL…EGRLLNLSCS (168 aa). NAD(+) contacts are provided by residues 271–275, glutamate 294, and asparagine 329; that span reads GYGEV. Serine 344 carries the phosphoserine modification. Residue 350-352 participates in NAD(+) binding; sequence MGH. The segment at 473 to 483 is PDZ-binding; it reads NGPFKPNYYRY.

The protein belongs to the adenosylhomocysteinase family. As to quaternary structure, forms multimers. Forms heteromultimers with AHCYL2 (via the C-terminal region). Interacts (when phosphorylated) with ITPR1 (when not phosphorylated); the interaction suppresses inositol 1,4,5-trisphosphate binding to ITPR1. Interacts with BCL2L10; this strengthens the interaction of AHCYL1 with ITPR1. Interacts with CFTR and SLC26A6; the interactions take place once AHCYL1 is released from ITPR1 and increase CFTR and SLC26A6 activities. Interacts with RRM1; in a phosphorylation- and (dATP)-dependent manner. Interacts (via PEST domain when phosphorylated) with SLC4A4 isoform 1 but not isoform 2; the interaction increases SLC4A4 isoform 1 activity. Interacts (when phosphorylated) with SLC9A3; the interaction is required for SLC9A3 apical location and activity. Interacts (when phosphorylated) with FIP1L1; the interaction is direct and associates AHCYL1 with the CPSF complex and RNA. Interacts with PAPOLA. Interacts with ZCCHC4. Interacts with AHCY. The cofactor is NAD(+). In terms of processing, phosphorylated at Ser/Thr residues between Ser-21 and Thr-25 in the PEST region: required for interaction with dATP-bound RRM1 and ITPR1. Phosphorylation at Ser-21 by PRKD1 and CAMK4 is required for further phosphorylations by CSNK1A1. Phosphorylation is induced by oxidative stress. Probably phosphorylated by CAMK2A; phosphorylation at Ser-21 may be required for interaction with SLC9A3. Dephosphorylated in response to apoptotic stress conditions which causes translocation of both AHCYL1 and BCL2L10 from mitochondria-associated endoplasmic reticulum membranes and promotes apoptosis. As to expression, expressed in kidney proximal tubules and outer medulla (at protein level).

The protein localises to the endoplasmic reticulum. It localises to the cytoplasm. Its subcellular location is the cytosol. It is found in the apical cell membrane. The protein resides in the microsome. In terms of biological role, multifaceted cellular regulator which coordinates several essential cellular functions including regulation of epithelial HCO3(-) and fluid secretion, mRNA processing and DNA replication. Regulates ITPR1 sensitivity to inositol 1,4,5-trisphosphate, competing for the common binding site and acting as endogenous 'pseudoligand' whose inhibitory activity can be modulated by its phosphorylation status. Promotes the formation of contact points between the endoplasmic reticulum (ER) and mitochondria, facilitating transfer of Ca(2+) from the ER to mitochondria. Under normal cellular conditions, functions cooperatively with BCL2L10 to limit ITPR1-mediated Ca(2+) release but, under apoptotic stress conditions, dephosphorylated which promotes dissociation of both AHCYL1 and BCL2L10 from mitochondria-associated endoplasmic reticulum membranes, inhibits BCL2L10 interaction with ITPR1 and leads to increased Ca(2+) transfer to mitochondria which promotes apoptosis. In the pancreatic and salivary ducts, at resting state, attenuates inositol 1,4,5-trisphosphate-induced calcium release by interacting with ITPR1. When extracellular stimuli induce ITPR1 phosphorylation or inositol 1,4,5-trisphosphate production, dissociates from ITPR1 to interact with CFTR and SLC26A6, mediating their synergistic activation by calcium and cAMP that stimulates the epithelial secretion of electrolytes and fluid. Also activates basolateral SLC4A4 isoform 1 to coordinate fluid and HCO3(-) secretion. Inhibits the effect of STK39 on SLC4A4 and CFTR by recruiting PP1 phosphatase which activates SLC4A4, SLC26A6 and CFTR through dephosphorylation. Mediates the induction of SLC9A3 surface expression produced by Angiotensin-2. Depending on the cell type, activates SLC9A3 in response to calcium or reverses SLC9A3R2-dependent calcium inhibition. May modulate the polyadenylation state of specific mRNAs, both by controlling the subcellular location of FIP1L1 and by inhibiting PAPOLA activity, in response to a stimulus that alters its phosphorylation state. Acts as a (dATP)-dependent inhibitor of ribonucleotide reductase large subunit RRM1, controlling the endogenous dNTP pool and ensuring normal cell cycle progression. In vitro does not exhibit any S-adenosyl-L-homocysteine hydrolase activity. This is S-adenosylhomocysteine hydrolase-like protein 1 from Rattus norvegicus (Rat).